Consider the following 401-residue polypeptide: Tumor necrosis factor receptor superfamily member 11B (401 aa).

A signal peptide spans 1–21 (MNNLLCCALVFLDISIKWTTQ). TNFR-Cys repeat units follow at residues 24–62 (FPPK…KTVC), 65–105 (CPDH…NRVC), 107–142 (CKEG…NTVC), and 145–185 (CPDG…DNIC). 8 disulfide bridges follow: cysteine 41/cysteine 54, cysteine 44/cysteine 62, cysteine 65/cysteine 80, cysteine 83/cysteine 97, cysteine 87/cysteine 105, cysteine 107/cysteine 118, cysteine 124/cysteine 142, and cysteine 145/cysteine 160. Asparagine 98 is a glycosylation site (N-linked (GlcNAc...) asparagine). Asparagine 152, asparagine 165, and asparagine 178 each carry an N-linked (GlcNAc...) asparagine glycan. Cysteine 166 and cysteine 185 are disulfide-bonded. 2 consecutive Death domains span residues 198–269 (DVTL…IVKK) and 270–365 (IIQD…TQSL). Asparagine 289 carries an N-linked (GlcNAc...) asparagine glycan.

In terms of assembly, homodimer. Interacts with TNFSF10 and TNFSF11. In terms of processing, N-glycosylated. Contains sialic acid residues. Post-translationally, the N-terminus is blocked. As to expression, highly expressed in adult lung, heart, kidney, liver, spleen, thymus, prostate, ovary, small intestine, thyroid, lymph node, trachea, adrenal gland, testis, and bone marrow. Detected at very low levels in brain, placenta and skeletal muscle. Highly expressed in fetal kidney, liver and lung.

It localises to the secreted. Its function is as follows. Acts as a decoy receptor for TNFSF11/RANKL and thereby neutralizes its function in osteoclastogenesis. Inhibits the activation of osteoclasts and promotes osteoclast apoptosis in vitro. Bone homeostasis seems to depend on the local ratio between TNFSF11 and TNFRSF11B. May also play a role in preventing arterial calcification. May act as decoy receptor for TNFSF10/TRAIL and protect against apoptosis. TNFSF10/TRAIL binding blocks the inhibition of osteoclastogenesis. This is Tumor necrosis factor receptor superfamily member 11B (TNFRSF11B) from Homo sapiens (Human).